Consider the following 336-residue polypeptide: tRNA dimethylallyltransferase (336 aa).

Residue 19-26 (GPTASGKT) coordinates ATP. 21–26 (TASGKT) contributes to the substrate binding site.

This sequence belongs to the IPP transferase family. As to quaternary structure, monomer. It depends on Mg(2+) as a cofactor.

It catalyses the reaction adenosine(37) in tRNA + dimethylallyl diphosphate = N(6)-dimethylallyladenosine(37) in tRNA + diphosphate. Catalyzes the transfer of a dimethylallyl group onto the adenine at position 37 in tRNAs that read codons beginning with uridine, leading to the formation of N6-(dimethylallyl)adenosine (i(6)A). This chain is tRNA dimethylallyltransferase, found in Bifidobacterium adolescentis (strain ATCC 15703 / DSM 20083 / NCTC 11814 / E194a).